The following is a 2040-amino-acid chain: Apolipoprotein(a) (2040 aa).

The N-terminal stretch at 1 to 19 is a signal peptide; it reads MEHKEVVLLLLLFLKSAAP. 10 consecutive Kringle domains span residues 27–105, 141–219, 255–333, 369–447, 483–561, 597–675, 711–789, 825–903, 939–1017, and 1053–1131; these read DCYH…LTQC, ECYH…LTQC, ECYH…LTRC, and DCYY…LTQC. 30 disulfides stabilise this stretch: Cys-28-Cys-105, Cys-49-Cys-88, Cys-77-Cys-100, Cys-142-Cys-219, Cys-163-Cys-202, Cys-191-Cys-214, Cys-256-Cys-333, Cys-277-Cys-316, Cys-305-Cys-328, Cys-370-Cys-447, Cys-391-Cys-430, Cys-419-Cys-442, Cys-484-Cys-561, Cys-505-Cys-544, Cys-533-Cys-556, Cys-598-Cys-675, Cys-619-Cys-658, Cys-647-Cys-670, Cys-712-Cys-789, Cys-733-Cys-772, Cys-761-Cys-784, Cys-826-Cys-903, Cys-847-Cys-886, Cys-875-Cys-898, Cys-940-Cys-1017, Cys-961-Cys-1000, Cys-989-Cys-1012, Cys-1054-Cys-1131, Cys-1075-Cys-1114, and Cys-1103-Cys-1126. A glycan (N-linked (GlcNAc...) asparagine) is linked at Asn-61. A glycan (N-linked (GlcNAc...) asparagine) is linked at Asn-101. A glycan (N-linked (GlcNAc...) asparagine) is linked at Asn-215. Asn-329 is a glycosylation site (N-linked (GlcNAc...) asparagine). N-linked (GlcNAc...) asparagine glycosylation occurs at Asn-443. Residue Asn-557 is glycosylated (N-linked (GlcNAc...) asparagine). Asn-671 carries N-linked (GlcNAc...) asparagine glycosylation. The N-linked (GlcNAc...) asparagine glycan is linked to Asn-785. A glycan (N-linked (GlcNAc...) asparagine) is linked at Asn-899. Residue Asn-1013 is glycosylated (N-linked (GlcNAc...) asparagine). Residue Asn-1127 is glycosylated (N-linked (GlcNAc...) asparagine). The interval 1147–1166 is disordered; that stretch reads DPSTEASSEEAPTEQSPGVQ. 2 Kringle domains span residues 1167–1245 and 1273–1351; these read DCYH…LTQC. 6 cysteine pairs are disulfide-bonded: Cys-1168–Cys-1245, Cys-1189–Cys-1228, Cys-1217–Cys-1240, Cys-1274–Cys-1351, Cys-1295–Cys-1334, and Cys-1323–Cys-1346. The N-linked (GlcNAc...) asparagine glycan is linked to Asn-1241. 2 N-linked (GlcNAc...) asparagine glycosylation sites follow: Asn-1347 and Asn-1381. Residues 1365–1388 are disordered; that stretch reads VPVPSTELPSEEAPTENSTGVQDC. The region spanning 1387 to 1465 is the Kringle 13 domain; sequence DCYRGDGQSY…RWEYCNLTRC (79 aa). Disulfide bonds link Cys-1388–Cys-1465, Cys-1409–Cys-1448, and Cys-1437–Cys-1460. Residue Asn-1461 is glycosylated (N-linked (GlcNAc...) asparagine). Residues 1476–1497 are disordered; sequence PTVAPVPSTEAPSEQAPPEKSP. Kringle domains follow at residues 1501 to 1579, 1615 to 1693, and 1719 to 1799; these read DCYH…LTQC, QCYH…LTRC, and DCMF…IPLC. 10 disulfides stabilise this stretch: Cys-1502–Cys-1579, Cys-1523–Cys-1562, Cys-1551–Cys-1574, Cys-1616–Cys-1693, Cys-1637–Cys-1676, Cys-1665–Cys-1688, Cys-1720–Cys-1799, Cys-1741–Cys-1782, Cys-1770–Cys-1794, and Cys-1846–Cys-1862. Asn-1575 carries N-linked (GlcNAc...) asparagine glycosylation. N-linked (GlcNAc...) asparagine glycosylation occurs at Asn-1689. Residues 1820–2038 enclose the Peptidase S1 domain; sequence IVGGCVAHPH…FVTWIEGMMR (219 aa). Catalysis depends on charge relay system residues His-1861 and Asp-1904. Cystine bridges form between Cys-1938–Cys-1996, Cys-1968–Cys-1975, and Cys-1986–Cys-2014. Catalysis depends on Ser-1990, which acts as the Charge relay system.

It belongs to the peptidase S1 family. Plasminogen subfamily. Disulfide-linked to apo-B100. Binds to fibronectin and decorin. In terms of processing, N- and O-glycosylated. The N-glycans are complex biantennary structures present in either a mono- or disialylated state. The O-glycans are mostly (80%) represented by the monosialylated core type I structure, NeuNAcalpha2-3Galbeta1-3GalNAc, with smaller amounts of disialylated and non-sialylated O-glycans also detected.

Apo(a) is the main constituent of lipoprotein(a) (Lp(a)). It has serine proteinase activity and is able of autoproteolysis. Inhibits tissue-type plasminogen activator 1. Lp(a) may be a ligand for megalin/Gp 330. In Homo sapiens (Human), this protein is Apolipoprotein(a) (LPA).